We begin with the raw amino-acid sequence, 352 residues long: tRNA pseudouridine synthase D (352 aa).

D81 (nucleophile) is an active-site residue. The TRUD domain maps to 157–303 (GVPNYFGGQR…MSHERRILRL (147 aa)).

Belongs to the pseudouridine synthase TruD family.

The enzyme catalyses uridine(13) in tRNA = pseudouridine(13) in tRNA. Responsible for synthesis of pseudouridine from uracil-13 in transfer RNAs. The chain is tRNA pseudouridine synthase D from Pseudomonas putida (strain W619).